Here is a 186-residue protein sequence, read N- to C-terminus: MKKIFDTTFTIKEVVATGIGAALFVVIGMVSIPTPVPNTSIQLQYAVQALFGVVFGPIVGFLTGFIGHALKDSIQYGNPWWTWVLASGLFGLVVGLLKNYLRVAQGVFESRDIITFNVAQFVANALVWVVIAPLGDILIYNEPSNKVFAQGVVATVANGLTVAVAGTLLLIAYARTQTKSGSLKKD.

5 consecutive transmembrane segments (helical) span residues 14-34 (VVATGIGAALFVVIGMVSIPT), 50-70 (LFGVVFGPIVGFLTGFIGHAL), 77-97 (GNPWWTWVLASGLFGLVVGLL), 119-139 (AQFVANALVWVVIAPLGDILI), and 152-172 (VVATVANGLTVAVAGTLLLIA).

The protein belongs to the UPF0397 family.

It localises to the cell membrane. In Streptococcus gordonii (strain Challis / ATCC 35105 / BCRC 15272 / CH1 / DL1 / V288), this protein is UPF0397 protein SGO_0469.